A 236-amino-acid chain; its full sequence is Putative glutamine amidotransferase-like protein YvdE (236 aa).

The Glutamine amidotransferase type-1 domain occupies 17–236 (SPFWWNKVSY…IFEIFANGTI (220 aa)).

The chain is Putative glutamine amidotransferase-like protein YvdE (yvdE) from Lactococcus lactis subsp. lactis (strain IL1403) (Streptococcus lactis).